Here is a 356-residue protein sequence, read N- to C-terminus: Guanine nucleotide-binding protein alpha-2 subunit (356 aa).

Residue glycine 2 is the site of N-myristoyl glycine attachment. Cysteine 4 is lipidated: S-palmitoyl cysteine. One can recognise a G-alpha domain in the interval 32 to 356 (RTVKLLLLGA…QSNLHKSGLY (325 aa)). Residues 35-48 (KLLLLGAGECGKST) form a G1 motif region. GTP contacts are provided by glutamate 43, glycine 45, lysine 46, serine 47, threonine 48, aspartate 153, leucine 178, threonine 184, glycine 206, asparagine 272, lysine 273, aspartate 275, and alanine 328. Serine 47 lines the Mg(2+) pocket. The tract at residues 176 to 184 (DTLLLRTKT) is G2 motif. Residue threonine 184 participates in Mg(2+) binding. Positions 199–208 (FRVFDVGGQR) are G3 motif. The tract at residues 268–275 (ILFLNKKD) is G4 motif. The tract at residues 326-331 (TCATDT) is G5 motif.

It belongs to the G-alpha family. G(q) subfamily. In terms of assembly, g proteins are composed of 3 units; alpha, beta and gamma. The alpha chain contains the guanine nucleotide binding site. Mg(2+) is required as a cofactor.

Its function is as follows. Guanine nucleotide-binding proteins (G proteins) are involved as modulators or transducers in various transmembrane signaling systems. Involved in behavioral responses to P.aeruginosa by controlling the expression of daf-7, a member of the TGF-beta family, in ASJ sensory neurons. The protein is Guanine nucleotide-binding protein alpha-2 subunit (gpa-2) of Caenorhabditis elegans.